The chain runs to 317 residues: 4-hydroxy-3-methylbut-2-enyl diphosphate reductase (317 aa).

Position 12 (cysteine 12) interacts with [4Fe-4S] cluster. (2E)-4-hydroxy-3-methylbut-2-enyl diphosphate-binding residues include histidine 41 and histidine 74. Dimethylallyl diphosphate contacts are provided by histidine 41 and histidine 74. Residues histidine 41 and histidine 74 each coordinate isopentenyl diphosphate. Residue cysteine 97 coordinates [4Fe-4S] cluster. Histidine 125 provides a ligand contact to (2E)-4-hydroxy-3-methylbut-2-enyl diphosphate. Histidine 125 is a dimethylallyl diphosphate binding site. Residue histidine 125 coordinates isopentenyl diphosphate. The active-site Proton donor is glutamate 127. Threonine 168 serves as a coordination point for (2E)-4-hydroxy-3-methylbut-2-enyl diphosphate. Cysteine 198 lines the [4Fe-4S] cluster pocket. (2E)-4-hydroxy-3-methylbut-2-enyl diphosphate-binding residues include serine 226, serine 227, asparagine 228, and serine 270. Residues serine 226, serine 227, asparagine 228, and serine 270 each coordinate dimethylallyl diphosphate. Serine 226, serine 227, asparagine 228, and serine 270 together coordinate isopentenyl diphosphate.

Belongs to the IspH family. As to quaternary structure, homodimer. Requires [4Fe-4S] cluster as cofactor.

It catalyses the reaction isopentenyl diphosphate + 2 oxidized [2Fe-2S]-[ferredoxin] + H2O = (2E)-4-hydroxy-3-methylbut-2-enyl diphosphate + 2 reduced [2Fe-2S]-[ferredoxin] + 2 H(+). The catalysed reaction is dimethylallyl diphosphate + 2 oxidized [2Fe-2S]-[ferredoxin] + H2O = (2E)-4-hydroxy-3-methylbut-2-enyl diphosphate + 2 reduced [2Fe-2S]-[ferredoxin] + 2 H(+). The protein operates within isoprenoid biosynthesis; dimethylallyl diphosphate biosynthesis; dimethylallyl diphosphate from (2E)-4-hydroxy-3-methylbutenyl diphosphate: step 1/1. Its pathway is isoprenoid biosynthesis; isopentenyl diphosphate biosynthesis via DXP pathway; isopentenyl diphosphate from 1-deoxy-D-xylulose 5-phosphate: step 6/6. Functionally, catalyzes the conversion of 1-hydroxy-2-methyl-2-(E)-butenyl 4-diphosphate (HMBPP) into a mixture of isopentenyl diphosphate (IPP) and dimethylallyl diphosphate (DMAPP). Acts in the terminal step of the DOXP/MEP pathway for isoprenoid precursor biosynthesis. This Yersinia pseudotuberculosis serotype IB (strain PB1/+) protein is 4-hydroxy-3-methylbut-2-enyl diphosphate reductase.